The chain runs to 156 residues: ATP synthase subunit b (156 aa).

Residues 1 to 21 (MSINATLLIQIIAFVLLIWFV) form a helical membrane-spanning segment.

This sequence belongs to the ATPase B chain family. F-type ATPases have 2 components, F(1) - the catalytic core - and F(0) - the membrane proton channel. F(1) has five subunits: alpha(3), beta(3), gamma(1), delta(1), epsilon(1). F(0) has three main subunits: a(1), b(2) and c(10-14). The alpha and beta chains form an alternating ring which encloses part of the gamma chain. F(1) is attached to F(0) by a central stalk formed by the gamma and epsilon chains, while a peripheral stalk is formed by the delta and b chains.

It is found in the cell inner membrane. F(1)F(0) ATP synthase produces ATP from ADP in the presence of a proton or sodium gradient. F-type ATPases consist of two structural domains, F(1) containing the extramembraneous catalytic core and F(0) containing the membrane proton channel, linked together by a central stalk and a peripheral stalk. During catalysis, ATP synthesis in the catalytic domain of F(1) is coupled via a rotary mechanism of the central stalk subunits to proton translocation. Functionally, component of the F(0) channel, it forms part of the peripheral stalk, linking F(1) to F(0). The polypeptide is ATP synthase subunit b (Hydrogenovibrio crunogenus (strain DSM 25203 / XCL-2) (Thiomicrospira crunogena)).